A 617-amino-acid polypeptide reads, in one-letter code: Estrogen receptor (617 aa).

The tract at residues 1 to 54 (MSEEQARAEAPAGARQRRRSELEGYSVSLASLKLSPMYPEEEQRTTGGISSTAH) is disordered. Residues 1–186 (MSEEQARAEA…AIGLVKEIRY (186 aa)) are modulating. 2 NR C4-type zinc fingers span residues 187 to 207 (CSVC…CEGC) and 223 to 247 (CPAT…LRKC). The nuclear receptor DNA-binding region spans 187-252 (CSVCSDYASG…RLRKCYEVGM (66 aa)). Residues 253 to 315 (MKGGFRKERG…GGGVADVVCM (63 aa)) are hinge. The tract at residues 269 to 303 (NRRPSGLKERERGYSKAQSGSDVREALPQDGQSSS) is disordered. The region spanning 316-552 (SPEQVLLLLL…DLLLEMLDAH (237 aa)) is the NR LBD domain. A disordered region spans residues 568 to 617 (VSSSPTTTATTPTTNTTTTTTTTTHHPSNGSTCPADLPSNPPGPGQSPSP). Residues 573–591 (TTTATTPTTNTTTTTTTTT) are compositionally biased toward low complexity. Residues 606 to 617 (SNPPGPGQSPSP) are compositionally biased toward pro residues.

It belongs to the nuclear hormone receptor family. NR3 subfamily. In terms of assembly, binds DNA as a homodimer. Can form a heterodimer with ER-beta. In terms of tissue distribution, ovary and testis.

The protein localises to the nucleus. Its function is as follows. The steroid hormones and their receptors are involved in the regulation of eukaryotic gene expression and affect cellular proliferation and differentiation in target tissues. In Ictalurus punctatus (Channel catfish), this protein is Estrogen receptor (esr1).